Reading from the N-terminus, the 202-residue chain is Urease accessory protein UreE (202 aa).

Basic and acidic residues predominate over residues 171 to 188 (HHGHSHSHDHDHDHDHQH). Positions 171–202 (HHGHSHSHDHDHDHDHQHGPGCTHGHRGHDHH) are disordered.

The protein belongs to the UreE family.

The protein resides in the cytoplasm. In terms of biological role, involved in urease metallocenter assembly. Binds nickel. Probably functions as a nickel donor during metallocenter assembly. In Burkholderia ambifaria (strain ATCC BAA-244 / DSM 16087 / CCUG 44356 / LMG 19182 / AMMD) (Burkholderia cepacia (strain AMMD)), this protein is Urease accessory protein UreE.